The primary structure comprises 167 residues: Kininogen-1 (167 aa).

The first 23 residues, 1–23, serve as a signal peptide directing secretion; that stretch reads MRLWFCLSFFIILCLEHFPGTLA.

This sequence belongs to the bradykinin-related peptide family. In terms of tissue distribution, expressed by the skin glands.

The protein localises to the secreted. Functionally, vasodilator. Bradykinin produces in vitro relaxation of rat arterial smooth muscle and constriction of intestinal smooth muscle. May target bradykinin receptors (BDKRB). The chain is Kininogen-1 from Bombina orientalis (Oriental fire-bellied toad).